A 113-amino-acid chain; its full sequence is Hydrogenase maturation factor HypA (113 aa).

His2 serves as a coordination point for Ni(2+). Zn(2+)-binding residues include Cys73, Cys76, Cys89, and Cys92.

It belongs to the HypA/HybF family.

Functionally, involved in the maturation of [NiFe] hydrogenases. Required for nickel insertion into the metal center of the hydrogenase. The polypeptide is Hydrogenase maturation factor HypA (Rhodopseudomonas palustris (strain TIE-1)).